Here is a 438-residue protein sequence, read N- to C-terminus: tRNA(Ile)-lysidine synthase (438 aa).

Ser-26 to Ser-31 serves as a coordination point for ATP.

It belongs to the tRNA(Ile)-lysidine synthase family.

It is found in the cytoplasm. The enzyme catalyses cytidine(34) in tRNA(Ile2) + L-lysine + ATP = lysidine(34) in tRNA(Ile2) + AMP + diphosphate + H(+). Its function is as follows. Ligates lysine onto the cytidine present at position 34 of the AUA codon-specific tRNA(Ile) that contains the anticodon CAU, in an ATP-dependent manner. Cytidine is converted to lysidine, thus changing the amino acid specificity of the tRNA from methionine to isoleucine. This Parabacteroides distasonis (strain ATCC 8503 / DSM 20701 / CIP 104284 / JCM 5825 / NCTC 11152) protein is tRNA(Ile)-lysidine synthase.